The chain runs to 545 residues: Chaperonin GroEL 1 (545 aa).

ATP is bound by residues 30–33, Lys-51, 87–91, Gly-415, and Asp-496; these read TLGP and DGTTT.

Belongs to the chaperonin (HSP60) family. As to quaternary structure, forms a cylinder of 14 subunits composed of two heptameric rings stacked back-to-back. Interacts with the co-chaperonin GroES.

It localises to the cytoplasm. The enzyme catalyses ATP + H2O + a folded polypeptide = ADP + phosphate + an unfolded polypeptide.. Its function is as follows. Together with its co-chaperonin GroES, plays an essential role in assisting protein folding. The GroEL-GroES system forms a nano-cage that allows encapsulation of the non-native substrate proteins and provides a physical environment optimized to promote and accelerate protein folding. This is Chaperonin GroEL 1 from Nitrobacter hamburgensis (strain DSM 10229 / NCIMB 13809 / X14).